Here is a 533-residue protein sequence, read N- to C-terminus: MAAAKAEMQLMSPLQISDPFGSFPHSPTMDNYPKLEEMMLLSNGAPQFLGAAGTPEGSGGNSSSSTSSGGGGGGGSNSGSSAFNPQGEPSEQPYEHLTTESFSDIALNNEKAMVETSYPSQTTRLPPITYTGRFSLEPAPNSGNTLWPEPLFSLVSGLVSMTNPPTSSSSAPSPAASSSSSASQSPPLSCAVPSNDSSPIYSAAPTFPTPNTDIFPEPQSQAFPGSAGTALQYPPPAYPATKGGFQVPMIPDYLFPQQQGDLSLGTPDQKPFQGLENRTQQPSLTPLSTIKAFATQSGSQDLKALNTTYQSQLIKPSRMRKYPNRPSKTPPHERPYACPVESCDRRFSRSDELTRHIRIHTGQKPFQCRICMRNFSRSDHLTTHIRTHTGEKPFACDICGRKFARSDERKRHTKIHLRQKDKKADKSVVASPAASSLSSYPSPVATSYPSPATTSFPSPVPTSYSSPGSSTYPSPAHSGFPSPSVATTFASVPPAFPTQVSSFPSAGVSSSFSTSTGLSDMTATFSPRTIEIC.

Disordered stretches follow at residues 1–94 (MAAA…EQPY) and 161–237 (MTNP…PPPA). Gly residues predominate over residues 68-77 (SGGGGGGGSN). Positions 164 to 189 (PPTSSSSAPSPAASSSSSASQSPPLS) are enriched in low complexity. Residue Lys303 forms a Glycyl lysine isopeptide (Lys-Gly) (interchain with G-Cter in SUMO2) linkage. The tract at residues 316–336 (PSRMRKYPNRPSKTPPHERPY) is disordered. 3 C2H2-type zinc fingers span residues 336–360 (YACPVESCDRRFSRSDELTRHIRIH), 366–388 (FQCRICMRNFSRSDHLTTHIRTH), and 394–416 (FACDICGRKFARSDERKRHTKIH). Residues 407 to 478 (DERKRHTKIH…SSTYPSPAHS (72 aa)) form a disordered region. Residues 411-421 (RHTKIHLRQKD) show a composition bias toward basic residues. Over residues 427–475 (SVVASPAASSLSSYPSPVATSYPSPATTSFPSPVPTSYSSPGSSTYPSP) the composition is skewed to low complexity.

The protein belongs to the EGR C2H2-type zinc-finger protein family. As to quaternary structure, interacts with SNAI1 and SP1 upon 12-O-tetradecanoylphorbol-13-acetate (TPA) induction. As to expression, detected in lung vasculature and in mononuclear phagocytes. Detected in liver (at protein level). Expressed in the liver in a circadian manner.

The protein resides in the nucleus. The protein localises to the cytoplasm. Transcriptional regulator. Recognizes and binds to the DNA sequence 5'-GCG(T/G)GGGCG-3'(EGR-site) in the promoter region of target genes. Binds double-stranded target DNA, irrespective of the cytosine methylation status. Regulates the transcription of numerous target genes, and thereby plays an important role in regulating the response to growth factors, DNA damage, and ischemia. Plays a role in the regulation of cell survival, proliferation and cell death. Activates expression of p53/TP53 and TGFB1, and thereby helps prevent tumor formation. Required for normal progress through mitosis and normal proliferation of hepatocytes after partial hepatectomy. Mediates responses to ischemia and hypoxia; regulates the expression of proteins such as IL1B and CXCL2 that are involved in inflammatory processes and development of tissue damage after ischemia. Regulates biosynthesis of luteinizing hormone (LHB) in the pituitary. Regulates the amplitude of the expression rhythms of clock genes: BMAL1, PER2 and NR1D1 in the liver via the activation of PER1 (clock repressor) transcription. Regulates the rhythmic expression of core-clock gene BMAL1 in the suprachiasmatic nucleus (SCN). The protein is Early growth response protein 1 (Egr1) of Mus musculus (Mouse).